The primary structure comprises 53 residues: Photosystem II reaction center protein K (53 aa).

The propeptide occupies 1-16; it reads MFYTNVETLLNTNCFA. Residues 28–48 form a helical membrane-spanning segment; sequence LVDVLPIIPLLFLLLAFVWQA.

Belongs to the PsbK family. As to quaternary structure, PSII is composed of 1 copy each of membrane proteins PsbA, PsbB, PsbC, PsbD, PsbE, PsbF, PsbH, PsbI, PsbJ, PsbK, PsbL, PsbM, PsbT, PsbY, PsbZ, Psb30/Ycf12, at least 3 peripheral proteins of the oxygen-evolving complex and a large number of cofactors. It forms dimeric complexes.

The protein localises to the plastid. It localises to the chloroplast thylakoid membrane. Functionally, one of the components of the core complex of photosystem II (PSII). PSII is a light-driven water:plastoquinone oxidoreductase that uses light energy to abstract electrons from H(2)O, generating O(2) and a proton gradient subsequently used for ATP formation. It consists of a core antenna complex that captures photons, and an electron transfer chain that converts photonic excitation into a charge separation. The polypeptide is Photosystem II reaction center protein K (Euglena anabaena (Euglenaria anabaena)).